Here is a 403-residue protein sequence, read N- to C-terminus: Phosphopentomutase (403 aa).

Mn(2+) is bound by residues D13, D298, H303, D339, H340, and H351.

It belongs to the phosphopentomutase family. It depends on Mn(2+) as a cofactor.

It is found in the cytoplasm. The enzyme catalyses 2-deoxy-alpha-D-ribose 1-phosphate = 2-deoxy-D-ribose 5-phosphate. The catalysed reaction is alpha-D-ribose 1-phosphate = D-ribose 5-phosphate. The protein operates within carbohydrate degradation; 2-deoxy-D-ribose 1-phosphate degradation; D-glyceraldehyde 3-phosphate and acetaldehyde from 2-deoxy-alpha-D-ribose 1-phosphate: step 1/2. In terms of biological role, isomerase that catalyzes the conversion of deoxy-ribose 1-phosphate (dRib-1-P) and ribose 1-phosphate (Rib-1-P) to deoxy-ribose 5-phosphate (dRib-5-P) and ribose 5-phosphate (Rib-5-P), respectively. The polypeptide is Phosphopentomutase (Streptococcus pneumoniae (strain Hungary19A-6)).